We begin with the raw amino-acid sequence, 619 residues long: 1-deoxy-D-xylulose-5-phosphate synthase (619 aa).

Residues His-80 and 121–123 (GHS) contribute to the thiamine diphosphate site. Asp-152 provides a ligand contact to Mg(2+). Residues 153 to 154 (GA), Asn-181, Tyr-288, and Glu-370 each bind thiamine diphosphate. Asn-181 is a Mg(2+) binding site.

Belongs to the transketolase family. DXPS subfamily. As to quaternary structure, homodimer. Requires Mg(2+) as cofactor. It depends on thiamine diphosphate as a cofactor.

The catalysed reaction is D-glyceraldehyde 3-phosphate + pyruvate + H(+) = 1-deoxy-D-xylulose 5-phosphate + CO2. It participates in metabolic intermediate biosynthesis; 1-deoxy-D-xylulose 5-phosphate biosynthesis; 1-deoxy-D-xylulose 5-phosphate from D-glyceraldehyde 3-phosphate and pyruvate: step 1/1. Its function is as follows. Catalyzes the acyloin condensation reaction between C atoms 2 and 3 of pyruvate and glyceraldehyde 3-phosphate to yield 1-deoxy-D-xylulose-5-phosphate (DXP). The chain is 1-deoxy-D-xylulose-5-phosphate synthase from Yersinia pseudotuberculosis serotype I (strain IP32953).